We begin with the raw amino-acid sequence, 384 residues long: MNDLVNLLDLDADALTAYCGELGEKPFRARQLQRWIHQFGASRFDAMSDLAKSLREKLATRAEIRSPAAITDNLSADGTRKWLLDVGNGNAVETVYIPEETRGTLCVSSQAGCAVNCRFCSTGKQGFSRNLTTGEIIGQLWMAEFAMREQLGRGPKDDRVISNVVMMGMGEPLLNYDAVVPAMRLMLDDNAYGLSRRRVTLSTSGVVPMMDRLSKDLPVALAVSLHASNDALRDVLVPLNKKYPLAELMAACRRYLEFAPRDFITFEYCMLDGVNDGVEHARELLKLVADVPCKFNLIPFNPFPESGLKRSNNDQIRRFAQVLMDAGIVTTIRKTRGDDIDAACGQLAGEVKDRTRLAERGKFGKITPLVPVAATGQAGEARPA.

Glutamate 93 (proton acceptor) is an active-site residue. Residues 99-339 (EETRGTLCVS…TTIRKTRGDD (241 aa)) form the Radical SAM core domain. An intrachain disulfide couples cysteine 106 to cysteine 344. Cysteine 113, cysteine 117, and cysteine 120 together coordinate [4Fe-4S] cluster. S-adenosyl-L-methionine-binding positions include 170–171 (GE), serine 202, 224–226 (SLH), and asparagine 301. Cysteine 344 functions as the S-methylcysteine intermediate in the catalytic mechanism.

It belongs to the radical SAM superfamily. RlmN family. Requires [4Fe-4S] cluster as cofactor.

The protein resides in the cytoplasm. The enzyme catalyses adenosine(2503) in 23S rRNA + 2 reduced [2Fe-2S]-[ferredoxin] + 2 S-adenosyl-L-methionine = 2-methyladenosine(2503) in 23S rRNA + 5'-deoxyadenosine + L-methionine + 2 oxidized [2Fe-2S]-[ferredoxin] + S-adenosyl-L-homocysteine. The catalysed reaction is adenosine(37) in tRNA + 2 reduced [2Fe-2S]-[ferredoxin] + 2 S-adenosyl-L-methionine = 2-methyladenosine(37) in tRNA + 5'-deoxyadenosine + L-methionine + 2 oxidized [2Fe-2S]-[ferredoxin] + S-adenosyl-L-homocysteine. Specifically methylates position 2 of adenine 2503 in 23S rRNA and position 2 of adenine 37 in tRNAs. m2A2503 modification seems to play a crucial role in the proofreading step occurring at the peptidyl transferase center and thus would serve to optimize ribosomal fidelity. The polypeptide is Dual-specificity RNA methyltransferase RlmN (Cupriavidus pinatubonensis (strain JMP 134 / LMG 1197) (Cupriavidus necator (strain JMP 134))).